A 367-amino-acid chain; its full sequence is Glutamate 5-kinase (367 aa).

Position 17 (Lys17) interacts with ATP. Substrate-binding residues include Ser57, Asp144, and Asn156. Residues 176–177 (SD) and 217–223 (TGGMTSK) contribute to the ATP site. In terms of domain architecture, PUA spans 279 to 357 (AGALTLDEGA…SELPGELRRP (79 aa)).

Belongs to the glutamate 5-kinase family.

It localises to the cytoplasm. It carries out the reaction L-glutamate + ATP = L-glutamyl 5-phosphate + ADP. Its pathway is amino-acid biosynthesis; L-proline biosynthesis; L-glutamate 5-semialdehyde from L-glutamate: step 1/2. Its function is as follows. Catalyzes the transfer of a phosphate group to glutamate to form L-glutamate 5-phosphate. In Mycobacterium avium (strain 104), this protein is Glutamate 5-kinase.